A 661-amino-acid polypeptide reads, in one-letter code: 1-deoxy-D-xylulose-5-phosphate synthase (661 aa).

Thiamine diphosphate-binding positions include H98 and 139-141 (AHS). Residue D170 participates in Mg(2+) binding. Residues 171 to 172 (GA), N199, Y309, and E391 each bind thiamine diphosphate. Residue N199 participates in Mg(2+) binding.

The protein belongs to the transketolase family. DXPS subfamily. Homodimer. The cofactor is Mg(2+). Requires thiamine diphosphate as cofactor.

It catalyses the reaction D-glyceraldehyde 3-phosphate + pyruvate + H(+) = 1-deoxy-D-xylulose 5-phosphate + CO2. The protein operates within metabolic intermediate biosynthesis; 1-deoxy-D-xylulose 5-phosphate biosynthesis; 1-deoxy-D-xylulose 5-phosphate from D-glyceraldehyde 3-phosphate and pyruvate: step 1/1. Functionally, catalyzes the acyloin condensation reaction between C atoms 2 and 3 of pyruvate and glyceraldehyde 3-phosphate to yield 1-deoxy-D-xylulose-5-phosphate (DXP). The polypeptide is 1-deoxy-D-xylulose-5-phosphate synthase (Bradyrhizobium diazoefficiens (strain JCM 10833 / BCRC 13528 / IAM 13628 / NBRC 14792 / USDA 110)).